The chain runs to 189 residues: Casparian strip membrane protein 1 (189 aa).

At 1–42 the chain is on the cytoplasmic side; it reads MEKNESSAIEIAESSKERKGKAPLLAAAVGHDRAAGYKRGVS. Residues 43–63 traverse the membrane as a helical segment; it reads IFDLILRISAATAALAATIVM. The Extracellular segment spans residues 64–90; the sequence is GTTEQTLPFFTQFFQFRAQYDDLPTFT. The chain crosses the membrane as a helical span at residues 91–111; the sequence is FFVVGMAIVTGYLILSVPLSI. Residues 112–130 are Cytoplasmic-facing; that stretch reads VCIARPVAIGPRFLLIVCD. A helical membrane pass occupies residues 131 to 151; that stretch reads TVTAVLATSAAGSSAAIVYLA. At 152–189 the chain is on the extracellular side; that stretch reads HNGNSDANWLAICQQFNDFCQRVSGAVVAAFVAVVCSS.

The protein belongs to the Casparian strip membrane proteins (CASP) family. As to quaternary structure, homodimer and heterodimers.

It is found in the cell membrane. Functionally, regulates membrane-cell wall junctions and localized cell wall deposition. Required for establishment of the Casparian strip membrane domain (CSD) and the subsequent formation of Casparian strips, a cell wall modification of the root endodermis that determines an apoplastic barrier between the intraorganismal apoplasm and the extraorganismal apoplasm and prevents lateral diffusion. The sequence is that of Casparian strip membrane protein 1 from Striga asiatica (Asiatic witchweed).